The primary structure comprises 388 residues: Chorismate synthase (388 aa).

Residues arginine 39 and arginine 45 each coordinate NADP(+). Residues 130–132 (RSS), 251–252 (NA), glycine 296, 311–315 (KPIPT), and arginine 337 each bind FMN.

This sequence belongs to the chorismate synthase family. In terms of assembly, homotetramer. FMNH2 is required as a cofactor.

The enzyme catalyses 5-O-(1-carboxyvinyl)-3-phosphoshikimate = chorismate + phosphate. Its pathway is metabolic intermediate biosynthesis; chorismate biosynthesis; chorismate from D-erythrose 4-phosphate and phosphoenolpyruvate: step 7/7. Its function is as follows. Catalyzes the anti-1,4-elimination of the C-3 phosphate and the C-6 proR hydrogen from 5-enolpyruvylshikimate-3-phosphate (EPSP) to yield chorismate, which is the branch point compound that serves as the starting substrate for the three terminal pathways of aromatic amino acid biosynthesis. This reaction introduces a second double bond into the aromatic ring system. This is Chorismate synthase from Streptococcus pneumoniae (strain ATCC 700669 / Spain 23F-1).